A 279-amino-acid polypeptide reads, in one-letter code: Proline-rich protein 23D1 (279 aa).

Disordered stretches follow at residues 1–60 (MYGY…PHLN) and 247–270 (LRPM…RPPS). Polar residues predominate over residues 15–33 (TEPQNDNEGETSLATTQMN).

The protein belongs to the PRR23 family.

This Homo sapiens (Human) protein is Proline-rich protein 23D1 (PRR23D1).